A 290-amino-acid chain; its full sequence is Protein translocase subunit SecF (290 aa).

The next 6 helical transmembrane spans lie at 15–35, 131–151, 156–176, 184–204, 234–256, and 260–282; these read VFMI…FTKG, KAIL…TVRF, AISA…IFAI, SFIA…IIVF, TLYT…GVVL, and ILAI…SAIL.

The protein belongs to the SecD/SecF family. SecF subfamily. As to quaternary structure, forms a complex with SecD. Part of the essential Sec protein translocation apparatus which comprises SecA, SecYEG and auxiliary proteins SecDF. Other proteins may also be involved.

Its subcellular location is the cell inner membrane. In terms of biological role, part of the Sec protein translocase complex. Interacts with the SecYEG preprotein conducting channel. SecDF uses the proton motive force (PMF) to complete protein translocation after the ATP-dependent function of SecA. This Dictyoglomus turgidum (strain DSM 6724 / Z-1310) protein is Protein translocase subunit SecF.